The sequence spans 430 residues: Glutamate-1-semialdehyde 2,1-aminomutase (430 aa).

N6-(pyridoxal phosphate)lysine is present on Lys268.

It belongs to the class-III pyridoxal-phosphate-dependent aminotransferase family. HemL subfamily. The cofactor is pyridoxal 5'-phosphate.

The protein resides in the cytoplasm. It carries out the reaction (S)-4-amino-5-oxopentanoate = 5-aminolevulinate. It functions in the pathway porphyrin-containing compound metabolism; protoporphyrin-IX biosynthesis; 5-aminolevulinate from L-glutamyl-tRNA(Glu): step 2/2. In Methanopyrus kandleri (strain AV19 / DSM 6324 / JCM 9639 / NBRC 100938), this protein is Glutamate-1-semialdehyde 2,1-aminomutase.